Reading from the N-terminus, the 112-residue chain is UPF0342 protein SPH_1504 (112 aa).

Belongs to the UPF0342 family.

This Streptococcus pneumoniae (strain Hungary19A-6) protein is UPF0342 protein SPH_1504.